Reading from the N-terminus, the 491-residue chain is Carbohydrate ABC transporter substrate-binding protein (491 aa).

The Zn(2+) site is built by Asp-212, His-247, His-252, and Glu-256.

It belongs to the bacterial solute-binding protein 1 family. In terms of assembly, exists as a monomer, homodimer, homotrimer and homotetramer; oligomerization increases with higher protein concentration.

The protein resides in the cell surface. Functionally, probably part of an ABC transporter complex involved in carbohydrate transport. The protein is Carbohydrate ABC transporter substrate-binding protein of Streptococcus pneumoniae serotype 4 (strain ATCC BAA-334 / TIGR4).